The sequence spans 314 residues: Ribonucleoside-diphosphate reductase small subunit (314 aa).

The Fe cation site is built by D73, E103, and H106. Residue Y110 is part of the active site. A helical membrane pass occupies residues 160 to 180 (VLMILIEGIFFSSSFAAIAYL). Fe cation is bound by residues E166, E200, and H203.

The protein belongs to the ribonucleoside diphosphate reductase small chain family. As to quaternary structure, heterotetramer composed of a homodimer of the large subunit (R1) and a homodimer of the small subunit (R2). Larger multisubunit protein complex are also active, composed of (R1)n(R2)n. Requires Fe cation as cofactor.

The protein localises to the host membrane. The enzyme catalyses a 2'-deoxyribonucleoside 5'-diphosphate + [thioredoxin]-disulfide + H2O = a ribonucleoside 5'-diphosphate + [thioredoxin]-dithiol. Ribonucleoside-diphosphate reductase holoenzyme provides the precursors necessary for viral DNA synthesis. Allows virus growth in non-dividing cells, as well as reactivation from latency in infected hosts. Catalyzes the biosynthesis of deoxyribonucleotides from the corresponding ribonucleotides. This chain is Ribonucleoside-diphosphate reductase small subunit, found in Bovine herpesvirus 1.1 (strain Cooper) (BoHV-1).